A 133-amino-acid chain; its full sequence is Small ribosomal subunit protein uS8 (133 aa).

Belongs to the universal ribosomal protein uS8 family. As to quaternary structure, part of the 30S ribosomal subunit. Contacts proteins S5 and S12.

One of the primary rRNA binding proteins, it binds directly to 16S rRNA central domain where it helps coordinate assembly of the platform of the 30S subunit. The sequence is that of Small ribosomal subunit protein uS8 from Chlamydia felis (strain Fe/C-56) (Chlamydophila felis).